The primary structure comprises 189 residues: Interferon alpha-10 (189 aa).

An N-terminal signal peptide occupies residues 1–23 (MALSFSLLMAVLVLSYKSICSLG). Disulfide bonds link C24-C122 and C52-C162.

It belongs to the alpha/beta interferon family.

It localises to the secreted. Its function is as follows. Produced by macrophages, IFN-alpha have antiviral activities. Interferon stimulates the production of two enzymes: a protein kinase and an oligoadenylate synthetase. This chain is Interferon alpha-10 (IFNA10), found in Homo sapiens (Human).